The sequence spans 662 residues: UvrABC system protein B (662 aa).

The region spanning 31–188 is the Helicase ATP-binding domain; sequence DNIEGGEKAQ…NDLVDIQFER (158 aa). Residue 44–51 participates in ATP binding; it reads GATGTGKT. The Beta-hairpin signature appears at 97–120; it reads YYDYYQPEAYVPSSDTYIEKDSSV. Residues 435–601 enclose the Helicase C-terminal domain; sequence QIDDLLGEIN…TIKKEIRDLI (167 aa). In terms of domain architecture, UVR spans 626–661; it reads KELVKKLEKQMQEAVEVLDFELAAQIRDMMLEVKAL.

The protein belongs to the UvrB family. Forms a heterotetramer with UvrA during the search for lesions. Interacts with UvrC in an incision complex.

The protein resides in the cytoplasm. Functionally, the UvrABC repair system catalyzes the recognition and processing of DNA lesions. A damage recognition complex composed of 2 UvrA and 2 UvrB subunits scans DNA for abnormalities. Upon binding of the UvrA(2)B(2) complex to a putative damaged site, the DNA wraps around one UvrB monomer. DNA wrap is dependent on ATP binding by UvrB and probably causes local melting of the DNA helix, facilitating insertion of UvrB beta-hairpin between the DNA strands. Then UvrB probes one DNA strand for the presence of a lesion. If a lesion is found the UvrA subunits dissociate and the UvrB-DNA preincision complex is formed. This complex is subsequently bound by UvrC and the second UvrB is released. If no lesion is found, the DNA wraps around the other UvrB subunit that will check the other stand for damage. The sequence is that of UvrABC system protein B from Streptococcus pneumoniae (strain Taiwan19F-14).